We begin with the raw amino-acid sequence, 1027 residues long: Exportin-T (1027 aa).

This sequence belongs to the exportin family.

Its subcellular location is the nucleus. It localises to the cytoplasm. TRNA nucleus export receptor which facilitates tRNA translocation across the nuclear pore complex. Involved in pre-tRNA splicing, probably by affecting the interaction of pre-tRNA with splicing endonuclease. The sequence is that of Exportin-T (LOS1) from Pyricularia oryzae (strain 70-15 / ATCC MYA-4617 / FGSC 8958) (Rice blast fungus).